The sequence spans 328 residues: Arabinose 5-phosphate isomerase KdsD (328 aa).

One can recognise an SIS domain in the interval 42–184; sequence CEKMFWCKGK…AVALLKARGF (143 aa). Residues 75-76, His-82, His-88, 114-123, 148-150, Thr-222, and Asp-275 contribute to the substrate site; these read GT, ALIPVLKRLH, and KVA. Residue His-82 coordinates Zn(2+). The CBS 1 domain occupies 210–268; that stretch reads MHTGDEIPHVKKTASLRDALLEVTRKNLGMTVICDDNMMIEGIFTDGDLRRVFDMGVDV. Residues 277–328 form the CBS 2 domain; that stretch reads MTPGGIRVRPGILAVEALNLMQSRHITSVMVADGDHLLGVLHMHDLLRAGVV.

Belongs to the SIS family. GutQ/KpsF subfamily. As to quaternary structure, homotetramer.

It catalyses the reaction D-arabinose 5-phosphate = D-ribulose 5-phosphate. Its pathway is carbohydrate biosynthesis; 3-deoxy-D-manno-octulosonate biosynthesis; 3-deoxy-D-manno-octulosonate from D-ribulose 5-phosphate: step 1/3. It functions in the pathway bacterial outer membrane biogenesis; lipopolysaccharide biosynthesis. Its function is as follows. Involved in the biosynthesis of 3-deoxy-D-manno-octulosonate (KDO), a unique 8-carbon sugar component of lipopolysaccharides (LPSs). Catalyzes the reversible aldol-ketol isomerization between D-ribulose 5-phosphate (Ru5P) and D-arabinose 5-phosphate (A5P). The protein is Arabinose 5-phosphate isomerase KdsD (kdsD) of Escherichia coli O157:H7.